The sequence spans 131 residues: L-ectoine synthase (131 aa).

The protein belongs to the ectoine synthase family.

It catalyses the reaction (2S)-4-acetamido-2-aminobutanoate = L-ectoine + H2O. The protein operates within amine and polyamine biosynthesis; ectoine biosynthesis; L-ectoine from L-aspartate 4-semialdehyde: step 3/3. Functionally, catalyzes the circularization of gamma-N-acetyl-alpha,gamma-diaminobutyric acid (ADABA) to ectoine (1,4,5,6-tetrahydro-2-methyl-4-pyrimidine carboxylic acid), which is an excellent osmoprotectant. The chain is L-ectoine synthase from Wolinella succinogenes (strain ATCC 29543 / DSM 1740 / CCUG 13145 / JCM 31913 / LMG 7466 / NCTC 11488 / FDC 602W) (Vibrio succinogenes).